The following is a 301-amino-acid chain: Epimerase family protein Mb2239 (301 aa).

The protein belongs to the NAD(P)-dependent epimerase/dehydratase family. SDR39U1 subfamily.

The protein is Epimerase family protein Mb2239 of Mycobacterium bovis (strain ATCC BAA-935 / AF2122/97).